A 227-amino-acid chain; its full sequence is Cytochrome c oxidase subunit 2 (227 aa).

Topologically, residues 1 to 14 (MAYPFQLGLQDATS) are mitochondrial intermembrane. Residues 15 to 45 (PIMEELMNFHDHTLMIVFLISSLVLYIISLM) traverse the membrane as a helical segment. Over 46–59 (LTTKLTHTSTMDAQ) the chain is Mitochondrial matrix. Residues 60–87 (EVETIWTILPAVILILIALPSLRILYMM) form a helical membrane-spanning segment. The Mitochondrial intermembrane segment spans residues 88 to 227 (DEINNPVLTV…NFENWSTSMI (140 aa)). 6 residues coordinate Cu cation: His161, Cys196, Glu198, Cys200, His204, and Met207. Glu198 lines the Mg(2+) pocket.

Belongs to the cytochrome c oxidase subunit 2 family. As to quaternary structure, component of the cytochrome c oxidase (complex IV, CIV), a multisubunit enzyme composed of 14 subunits. The complex is composed of a catalytic core of 3 subunits MT-CO1, MT-CO2 and MT-CO3, encoded in the mitochondrial DNA, and 11 supernumerary subunits COX4I, COX5A, COX5B, COX6A, COX6B, COX6C, COX7A, COX7B, COX7C, COX8 and NDUFA4, which are encoded in the nuclear genome. The complex exists as a monomer or a dimer and forms supercomplexes (SCs) in the inner mitochondrial membrane with NADH-ubiquinone oxidoreductase (complex I, CI) and ubiquinol-cytochrome c oxidoreductase (cytochrome b-c1 complex, complex III, CIII), resulting in different assemblies (supercomplex SCI(1)III(2)IV(1) and megacomplex MCI(2)III(2)IV(2)). Found in a complex with TMEM177, COA6, COX18, COX20, SCO1 and SCO2. Interacts with TMEM177 in a COX20-dependent manner. Interacts with COX20. Interacts with COX16. The cofactor is Cu cation.

The protein resides in the mitochondrion inner membrane. The enzyme catalyses 4 Fe(II)-[cytochrome c] + O2 + 8 H(+)(in) = 4 Fe(III)-[cytochrome c] + 2 H2O + 4 H(+)(out). Its function is as follows. Component of the cytochrome c oxidase, the last enzyme in the mitochondrial electron transport chain which drives oxidative phosphorylation. The respiratory chain contains 3 multisubunit complexes succinate dehydrogenase (complex II, CII), ubiquinol-cytochrome c oxidoreductase (cytochrome b-c1 complex, complex III, CIII) and cytochrome c oxidase (complex IV, CIV), that cooperate to transfer electrons derived from NADH and succinate to molecular oxygen, creating an electrochemical gradient over the inner membrane that drives transmembrane transport and the ATP synthase. Cytochrome c oxidase is the component of the respiratory chain that catalyzes the reduction of oxygen to water. Electrons originating from reduced cytochrome c in the intermembrane space (IMS) are transferred via the dinuclear copper A center (CU(A)) of subunit 2 and heme A of subunit 1 to the active site in subunit 1, a binuclear center (BNC) formed by heme A3 and copper B (CU(B)). The BNC reduces molecular oxygen to 2 water molecules using 4 electrons from cytochrome c in the IMS and 4 protons from the mitochondrial matrix. The protein is Cytochrome c oxidase subunit 2 (MT-CO2) of Apodemus mystacinus (Broad-toothed field mouse).